The chain runs to 200 residues: Potassium-transporting ATPase KdpC subunit (200 aa).

The helical transmembrane segment at 9–31 (LVMLVALTALTGLVYPLAMTGVA) threads the bilayer. The interval 68-97 (GRPSATTAPDPQDSSKTVPSPYNAANSMGA) is disordered. Over residues 71 to 96 (SATTAPDPQDSSKTVPSPYNAANSMG) the composition is skewed to polar residues.

Belongs to the KdpC family. As to quaternary structure, the system is composed of three essential subunits: KdpA, KdpB and KdpC.

The protein localises to the cell inner membrane. Functionally, part of the high-affinity ATP-driven potassium transport (or Kdp) system, which catalyzes the hydrolysis of ATP coupled with the electrogenic transport of potassium into the cytoplasm. This subunit acts as a catalytic chaperone that increases the ATP-binding affinity of the ATP-hydrolyzing subunit KdpB by the formation of a transient KdpB/KdpC/ATP ternary complex. This is Potassium-transporting ATPase KdpC subunit from Rhodopseudomonas palustris (strain BisA53).